Reading from the N-terminus, the 125-residue chain is Antitoxin MazE5 (125 aa).

Forms a complex with cognate toxin MazF5.

Functionally, antitoxin component of a type II toxin-antitoxin (TA) system. Upon expression in M.smegmatis neutralizes the effect of cognate toxin MazF5. The polypeptide is Antitoxin MazE5 (mazE5) (Mycobacterium tuberculosis (strain ATCC 25618 / H37Rv)).